Consider the following 262-residue polypeptide: 3-methyl-2-oxobutanoate hydroxymethyltransferase (262 aa).

Mg(2+) contacts are provided by aspartate 42 and aspartate 81. 3-methyl-2-oxobutanoate contacts are provided by residues 42 to 43 (DS), aspartate 81, and lysine 110. Glutamate 112 contacts Mg(2+). Glutamate 179 (proton acceptor) is an active-site residue.

It belongs to the PanB family. Homodecamer; pentamer of dimers. Requires Mg(2+) as cofactor.

It localises to the cytoplasm. The enzyme catalyses 3-methyl-2-oxobutanoate + (6R)-5,10-methylene-5,6,7,8-tetrahydrofolate + H2O = 2-dehydropantoate + (6S)-5,6,7,8-tetrahydrofolate. It participates in cofactor biosynthesis; (R)-pantothenate biosynthesis; (R)-pantoate from 3-methyl-2-oxobutanoate: step 1/2. Its function is as follows. Catalyzes the reversible reaction in which hydroxymethyl group from 5,10-methylenetetrahydrofolate is transferred onto alpha-ketoisovalerate to form ketopantoate. In Methylobacillus flagellatus (strain ATCC 51484 / DSM 6875 / VKM B-1610 / KT), this protein is 3-methyl-2-oxobutanoate hydroxymethyltransferase.